The following is a 212-amino-acid chain: Guanylate kinase (212 aa).

A Guanylate kinase-like domain is found at 7–187 (GLLIVLSGPS…AADRIIAIIR (181 aa)). Position 14–21 (14–21 (GPSGVGKA)) interacts with ATP.

The protein belongs to the guanylate kinase family.

Its subcellular location is the cytoplasm. It catalyses the reaction GMP + ATP = GDP + ADP. Functionally, essential for recycling GMP and indirectly, cGMP. The chain is Guanylate kinase from Onion yellows phytoplasma (strain OY-M).